Reading from the N-terminus, the 510-residue chain is Inositol-3-phosphate synthase (510 aa).

Residues glycine 70, glycine 71, asparagine 72, asparagine 73, aspartate 143, isoleucine 180, glutamine 190, arginine 193, threonine 230, alanine 231, asparagine 232, threonine 233, glycine 281, serine 282, aspartate 306, serine 309, asparagine 340, asparagine 341, aspartate 342, lysine 355, glycine 393, aspartate 394, aspartate 422, and serine 423 each coordinate NAD(+).

It belongs to the myo-inositol 1-phosphate synthase family. It depends on NAD(+) as a cofactor.

It is found in the cytoplasm. Its subcellular location is the cytosol. It localises to the nucleus. It carries out the reaction D-glucose 6-phosphate = 1D-myo-inositol 3-phosphate. The protein operates within polyol metabolism; myo-inositol biosynthesis; myo-inositol from D-glucose 6-phosphate: step 1/2. Its function is as follows. Key enzyme in myo-inositol biosynthesis pathway that catalyzes the conversion of glucose 6-phosphate to 1-myo-inositol 1-phosphate in a NAD-dependent manner. In Hordeum vulgare (Barley), this protein is Inositol-3-phosphate synthase.